The chain runs to 229 residues: Putative N-acetylmannosamine-6-phosphate 2-epimerase (229 aa).

This sequence belongs to the NanE family.

It carries out the reaction an N-acyl-D-glucosamine 6-phosphate = an N-acyl-D-mannosamine 6-phosphate. It functions in the pathway amino-sugar metabolism; N-acetylneuraminate degradation; D-fructose 6-phosphate from N-acetylneuraminate: step 3/5. Functionally, converts N-acetylmannosamine-6-phosphate (ManNAc-6-P) to N-acetylglucosamine-6-phosphate (GlcNAc-6-P). This Actinobacillus pleuropneumoniae serotype 3 (strain JL03) protein is Putative N-acetylmannosamine-6-phosphate 2-epimerase.